A 271-amino-acid polypeptide reads, in one-letter code: 5-deoxy-glucuronate isomerase (271 aa).

Belongs to the isomerase IolB family.

The enzyme catalyses 5-deoxy-D-glucuronate = 5-dehydro-2-deoxy-D-gluconate. It participates in polyol metabolism; myo-inositol degradation into acetyl-CoA; acetyl-CoA from myo-inositol: step 4/7. Involved in the isomerization of 5-deoxy-glucuronate (5DG) to 5-dehydro-2-deoxy-D-gluconate (DKG or 2-deoxy-5-keto-D-gluconate). This Bacillus velezensis (strain DSM 23117 / BGSC 10A6 / LMG 26770 / FZB42) (Bacillus amyloliquefaciens subsp. plantarum) protein is 5-deoxy-glucuronate isomerase.